A 456-amino-acid chain; its full sequence is Phosphomethylpyrimidine synthase (456 aa).

Substrate is bound by residues asparagine 80, methionine 109, tyrosine 139, histidine 175, serine 195–glycine 197, aspartate 236–arginine 239, and glutamate 275. Histidine 279 contacts Zn(2+). Tyrosine 302 contacts substrate. A Zn(2+)-binding site is contributed by histidine 343. Residues cysteine 423, cysteine 426, and cysteine 431 each contribute to the [4Fe-4S] cluster site.

The protein belongs to the ThiC family. [4Fe-4S] cluster serves as cofactor.

It catalyses the reaction 5-amino-1-(5-phospho-beta-D-ribosyl)imidazole + S-adenosyl-L-methionine = 4-amino-2-methyl-5-(phosphooxymethyl)pyrimidine + CO + 5'-deoxyadenosine + formate + L-methionine + 3 H(+). It participates in cofactor biosynthesis; thiamine diphosphate biosynthesis. Its function is as follows. Catalyzes the synthesis of the hydroxymethylpyrimidine phosphate (HMP-P) moiety of thiamine from aminoimidazole ribotide (AIR) in a radical S-adenosyl-L-methionine (SAM)-dependent reaction. The chain is Phosphomethylpyrimidine synthase from Prochlorococcus marinus (strain MIT 9312).